We begin with the raw amino-acid sequence, 95 residues long: Protein RALF-like 16 (95 aa).

Positions 1 to 29 (MVAYEKSPIVFLFATMMLVMFLFCGSGEA) are cleaved as a signal peptide. 2 disulfide bridges follow: C45–C53 and C65–C71.

It belongs to the plant rapid alkalinization factor (RALF) family.

It localises to the secreted. Functionally, cell signaling peptide that may regulate plant stress, growth, and development. Mediates a rapid alkalinization of extracellular space by mediating a transient increase in the cytoplasmic Ca(2+) concentration leading to a calcium-dependent signaling events through a cell surface receptor and a concomitant activation of some intracellular mitogen-activated protein kinases. The polypeptide is Protein RALF-like 16 (RALFL16) (Arabidopsis thaliana (Mouse-ear cress)).